The chain runs to 358 residues: Heme A synthase (358 aa).

Helical transmembrane passes span 22–42, 107–127, 133–153, 172–192, 208–228, 269–289, 302–322, and 324–344; these read IQVW…VGGA, VLGR…WVTK, IFLQ…IGWW, LAIH…LSRG, FAGW…LVAG, FVHR…ALYV, AIFL…TLLH, and VPIS…CFSV. Position 271 (His271) interacts with heme. Position 332 (His332) interacts with heme.

The protein belongs to the COX15/CtaA family. Type 2 subfamily. In terms of assembly, interacts with CtaB. It depends on heme b as a cofactor.

It is found in the cell membrane. It carries out the reaction Fe(II)-heme o + 2 A + H2O = Fe(II)-heme a + 2 AH2. It participates in porphyrin-containing compound metabolism; heme A biosynthesis; heme A from heme O: step 1/1. Functionally, catalyzes the conversion of heme O to heme A by two successive hydroxylations of the methyl group at C8. The first hydroxylation forms heme I, the second hydroxylation results in an unstable dihydroxymethyl group, which spontaneously dehydrates, resulting in the formyl group of heme A. The polypeptide is Heme A synthase (Bartonella bacilliformis (strain ATCC 35685 / KC583 / Herrer 020/F12,63)).